Reading from the N-terminus, the 276-residue chain is NADPH-dependent 7-cyano-7-deazaguanine reductase (276 aa).

83-85 (IES) contributes to the substrate binding site. Residue 85-86 (SK) participates in NADPH binding. Cys184 (thioimide intermediate) is an active-site residue. The Proton donor role is filled by Asp191. 223–224 (HE) contacts substrate. 252–253 (RG) provides a ligand contact to NADPH.

Belongs to the GTP cyclohydrolase I family. QueF type 2 subfamily. As to quaternary structure, homodimer.

It localises to the cytoplasm. The enzyme catalyses 7-aminomethyl-7-carbaguanine + 2 NADP(+) = 7-cyano-7-deazaguanine + 2 NADPH + 3 H(+). It participates in tRNA modification; tRNA-queuosine biosynthesis. Functionally, catalyzes the NADPH-dependent reduction of 7-cyano-7-deazaguanine (preQ0) to 7-aminomethyl-7-deazaguanine (preQ1). This is NADPH-dependent 7-cyano-7-deazaguanine reductase from Pseudomonas aeruginosa (strain ATCC 15692 / DSM 22644 / CIP 104116 / JCM 14847 / LMG 12228 / 1C / PRS 101 / PAO1).